The sequence spans 212 residues: Thymidylate kinase (212 aa).

11–18 (GLEGAGKS) provides a ligand contact to ATP.

This sequence belongs to the thymidylate kinase family.

It carries out the reaction dTMP + ATP = dTDP + ADP. Functionally, phosphorylation of dTMP to form dTDP in both de novo and salvage pathways of dTTP synthesis. The chain is Thymidylate kinase from Vibrio vulnificus (strain CMCP6).